The primary structure comprises 227 residues: Cytochrome c oxidase subunit 2 (227 aa).

Over 1 to 14 (MAYPFQLGLQDATS) the chain is Mitochondrial intermembrane. The helical transmembrane segment at 15-45 (PIMEELTNFHDHTLMIVFLISSLVLYIISLM) threads the bilayer. The Mitochondrial matrix portion of the chain corresponds to 46–59 (LTTKLTHTSTMDAQ). The helical transmembrane segment at 60 to 87 (EVETIWTILPAVILILIALPSLRILYMM) threads the bilayer. The Mitochondrial intermembrane segment spans residues 88-227 (DEINNPVLTV…HFENWSTSMI (140 aa)). 6 residues coordinate Cu cation: His-161, Cys-196, Glu-198, Cys-200, His-204, and Met-207. Glu-198 lines the Mg(2+) pocket.

Belongs to the cytochrome c oxidase subunit 2 family. In terms of assembly, component of the cytochrome c oxidase (complex IV, CIV), a multisubunit enzyme composed of 14 subunits. The complex is composed of a catalytic core of 3 subunits MT-CO1, MT-CO2 and MT-CO3, encoded in the mitochondrial DNA, and 11 supernumerary subunits COX4I, COX5A, COX5B, COX6A, COX6B, COX6C, COX7A, COX7B, COX7C, COX8 and NDUFA4, which are encoded in the nuclear genome. The complex exists as a monomer or a dimer and forms supercomplexes (SCs) in the inner mitochondrial membrane with NADH-ubiquinone oxidoreductase (complex I, CI) and ubiquinol-cytochrome c oxidoreductase (cytochrome b-c1 complex, complex III, CIII), resulting in different assemblies (supercomplex SCI(1)III(2)IV(1) and megacomplex MCI(2)III(2)IV(2)). Found in a complex with TMEM177, COA6, COX18, COX20, SCO1 and SCO2. Interacts with TMEM177 in a COX20-dependent manner. Interacts with COX20. Interacts with COX16. Cu cation serves as cofactor.

The protein localises to the mitochondrion inner membrane. It catalyses the reaction 4 Fe(II)-[cytochrome c] + O2 + 8 H(+)(in) = 4 Fe(III)-[cytochrome c] + 2 H2O + 4 H(+)(out). Component of the cytochrome c oxidase, the last enzyme in the mitochondrial electron transport chain which drives oxidative phosphorylation. The respiratory chain contains 3 multisubunit complexes succinate dehydrogenase (complex II, CII), ubiquinol-cytochrome c oxidoreductase (cytochrome b-c1 complex, complex III, CIII) and cytochrome c oxidase (complex IV, CIV), that cooperate to transfer electrons derived from NADH and succinate to molecular oxygen, creating an electrochemical gradient over the inner membrane that drives transmembrane transport and the ATP synthase. Cytochrome c oxidase is the component of the respiratory chain that catalyzes the reduction of oxygen to water. Electrons originating from reduced cytochrome c in the intermembrane space (IMS) are transferred via the dinuclear copper A center (CU(A)) of subunit 2 and heme A of subunit 1 to the active site in subunit 1, a binuclear center (BNC) formed by heme A3 and copper B (CU(B)). The BNC reduces molecular oxygen to 2 water molecules using 4 electrons from cytochrome c in the IMS and 4 protons from the mitochondrial matrix. This Praomys taitae (Taita hill rat) protein is Cytochrome c oxidase subunit 2 (MT-CO2).